The following is a 481-amino-acid chain: 2-succinylbenzoate--CoA ligase (481 aa).

The protein belongs to the ATP-dependent AMP-binding enzyme family. MenE subfamily.

The enzyme catalyses 2-succinylbenzoate + ATP + CoA = 2-succinylbenzoyl-CoA + AMP + diphosphate. Its pathway is quinol/quinone metabolism; 1,4-dihydroxy-2-naphthoate biosynthesis; 1,4-dihydroxy-2-naphthoate from chorismate: step 5/7. The protein operates within quinol/quinone metabolism; menaquinone biosynthesis. Functionally, converts 2-succinylbenzoate (OSB) to 2-succinylbenzoyl-CoA (OSB-CoA). The chain is 2-succinylbenzoate--CoA ligase from Bacillus cereus (strain ATCC 10987 / NRS 248).